The chain runs to 473 residues: Glucose facilitated diffusion protein (473 aa).

The Cytoplasmic portion of the chain corresponds to 1–13 (MSSESSQGLVTRL). A helical membrane pass occupies residues 14–34 (ALIAAIGGLLFGYDSAVIAAI). At 35–59 (GTPVDIHFIAPRHLSATAAASLSGM) the chain is on the periplasmic side. A helical transmembrane segment spans residues 60-80 (VVVAVLVGCVTGSLLSGWIGI). Residues 81–85 (RFGRR) lie on the Cytoplasmic side of the membrane. A helical membrane pass occupies residues 86–106 (GGLLMSSICFVAAGFGAALTE). Residues 107-112 (KLFGTG) lie on the Periplasmic side of the membrane. Residues 113–133 (GSALQIFCFFRFLAGLGIGVV) form a helical membrane-spanning segment. Over 134-158 (STLTPTYIAEIAPPDKRGQMVSGQQ) the chain is Cytoplasmic. A helical membrane pass occupies residues 159 to 179 (MAIVTGALTGYIFTWLLAHFG). Topologically, residues 180 to 187 (SIDWVNAS) are periplasmic. A helical transmembrane segment spans residues 188–208 (GWCWSPASEGLIGIAFLLLLL). At 209–257 (TAPDTPHWLVMKGRHSEASKILARLEPQADPNLTIQKIKAGFDKAMDKS) the chain is on the cytoplasmic side. A helical membrane pass occupies residues 258–278 (SAGLFAFGITVVFAGVSVAAF). The Periplasmic portion of the chain corresponds to 279 to 303 (QQLVGINAVLYYAPQMFQNLGFGAD). A helical membrane pass occupies residues 304–324 (TALLQTISIGVVNFIFTMIAS). The Cytoplasmic portion of the chain corresponds to 325 to 335 (RVVDRFGRKPL). A helical transmembrane segment spans residues 336 to 356 (LIWGALGMAAMMAVLGCCFWF). At 357 to 366 (KVGGVLPLAS) the chain is on the periplasmic side. A helical transmembrane segment spans residues 367-387 (VLLYIAVFGMSWGPVCWVVLS). Residues 388–396 (EMFPSSIKG) lie on the Cytoplasmic side of the membrane. A helical membrane pass occupies residues 397-417 (AAMPIAVTGQWLANILVNFLF). Residues 418–429 (KVADGSPALNQT) are Periplasmic-facing. A helical transmembrane segment spans residues 430–450 (FNHGFSYLVFAALSILGGLIV). At 451–473 (ARFVPETKGRSLDEIEEMWRSQK) the chain is on the cytoplasmic side.

This sequence belongs to the major facilitator superfamily. Sugar transporter (TC 2.A.1.1) family.

It is found in the cell inner membrane. In terms of biological role, allows uptake of glucose by the cell; allows growth on glucose minimal medium by E.coli cells impaired in glucose transport. Also transports fructose, but has a strong preference for glucose. This Zymomonas mobilis subsp. mobilis (strain ATCC 31821 / ZM4 / CP4) protein is Glucose facilitated diffusion protein.